A 211-amino-acid polypeptide reads, in one-letter code: uncharacterized protein (211 aa).

The tract at residues Ala155 to Ser211 is disordered. Over residues Thr178–Asp188 the composition is skewed to acidic residues. Positions Ser195–Ser211 are enriched in low complexity.

This is an uncharacterized protein from Schizosaccharomyces pombe (strain 972 / ATCC 24843) (Fission yeast).